A 2083-amino-acid chain; its full sequence is Nonribosomal peptide synthetase sidD (2083 aa).

Residues 251–650 form an adenylation 1 region; the sequence is TYRQIDQYSS…GEIESQLRAR (400 aa). The Carrier 1 domain occupies 764–840; the sequence is RELSDLERRL…AMASVVRICD (77 aa). O-(pantetheine 4'-phosphoryl)serine is present on Ser-801. The interval 876 to 1146 is condensation 1; it reads EDIYPCTPTQ…IATVPIRVRI (271 aa). An adenylation 2 region spans residues 1336–1421; that stretch reads LSPIGCVGEL…TEIERHLAEH (86 aa). One can recognise a Carrier 2 domain in the interval 1557–1633; sequence NHLSASESIL…DAARVMKVDE (77 aa). Ser-1594 is modified (O-(pantetheine 4'-phosphoryl)serine). Positions 1674–1946 are condensation 2; it reads DVLPVTDSQD…YQLTPVRVPF (273 aa).

The protein belongs to the NRP synthetase family.

Its pathway is siderophore biosynthesis. In terms of biological role, nonribosomal peptide synthetase; part of the siderophore biosynthetic pathway. Aspergillus fumigatus produces four types of siderophores, low-molecular-mass iron chelators, including excreted fusarinine C (FsC) and triacetylfusarinine C (TAFC) for iron uptake; and intacellular ferricrocin (FC) for hyphal and hydroxyferricrocin (HFC) for conidial iron distribution and storage. TAFC consists of three N(2)-acetyl-N(5)-anhydromevalonyl-N(5)-hydroxyornithine residues cyclically linked by ester bonds; FC is a cyclic hexapeptide with the structure Gly-Ser-Gly-(N(5)-acetyl-N(5)-hydroxyornithine)x3. The biosynthesis of all four siderophores depends on the hydroxylation of ornithine, catalyzed by the monooxygenase sidA. Subsequently, the pathways for biosynthesis of extra- and intracellular siderophores split. For biosynthesis of extracellular siderophores, the transacylase sidF transfers anhydromevalonyl to N(5)-hydroxyornithine. The required anhydromevalonyl-CoA moiety is derived from mevalonate by CoA ligation and dehydration catalyzed by sidI and sidH respectively. The acetylation of N(5)-hydroxyornithine for FC biosynthesis involves the constitutively expressed sidL. FC is hydroxylated to HFC by an as yet uncharacterized enzyme during conidiation. Assembly of fusarinine C (FsC) and FC is catalyzed by two different nonribosomal peptide synthetases (NRPS), sidD and sidC respectively. Subsequently, sidG catalyzes N2-acetylation of FsC for forming TAFC. Both extra- and intracellular siderophores are crucial for growth during iron limitation and virulence. This Aspergillus fumigatus (strain ATCC MYA-4609 / CBS 101355 / FGSC A1100 / Af293) (Neosartorya fumigata) protein is Nonribosomal peptide synthetase sidD.